A 181-amino-acid polypeptide reads, in one-letter code: Protein GrpE (181 aa).

This sequence belongs to the GrpE family. As to quaternary structure, homodimer.

The protein resides in the cytoplasm. Participates actively in the response to hyperosmotic and heat shock by preventing the aggregation of stress-denatured proteins, in association with DnaK and GrpE. It is the nucleotide exchange factor for DnaK and may function as a thermosensor. Unfolded proteins bind initially to DnaJ; upon interaction with the DnaJ-bound protein, DnaK hydrolyzes its bound ATP, resulting in the formation of a stable complex. GrpE releases ADP from DnaK; ATP binding to DnaK triggers the release of the substrate protein, thus completing the reaction cycle. Several rounds of ATP-dependent interactions between DnaJ, DnaK and GrpE are required for fully efficient folding. The protein is Protein GrpE of Delftia acidovorans (strain DSM 14801 / SPH-1).